A 346-amino-acid polypeptide reads, in one-letter code: Protein pelota homolog (346 aa).

This sequence belongs to the eukaryotic release factor 1 family. Pelota subfamily. In terms of assembly, monomer. The cofactor is a divalent metal cation.

The protein resides in the cytoplasm. Its function is as follows. May function in recognizing stalled ribosomes, interact with stem-loop structures in stalled mRNA molecules, and effect endonucleolytic cleavage of the mRNA. May play a role in the release non-functional ribosomes and degradation of damaged mRNAs. Has endoribonuclease activity. The protein is Protein pelota homolog of Ignicoccus hospitalis (strain KIN4/I / DSM 18386 / JCM 14125).